Consider the following 506-residue polypeptide: Ribose import ATP-binding protein RbsA 1 (506 aa).

ABC transporter domains are found at residues leucine 5–arginine 241 and arginine 254–alanine 498. Residue glycine 37–serine 44 participates in ATP binding.

It belongs to the ABC transporter superfamily. Ribose importer (TC 3.A.1.2.1) family. The complex is composed of an ATP-binding protein (RbsA), two transmembrane proteins (RbsC) and a solute-binding protein (RbsB).

The protein resides in the cell inner membrane. It carries out the reaction D-ribose(out) + ATP + H2O = D-ribose(in) + ADP + phosphate + H(+). Its function is as follows. Part of the ABC transporter complex RbsABC involved in ribose import. Responsible for energy coupling to the transport system. This is Ribose import ATP-binding protein RbsA 1 from Burkholderia thailandensis (strain ATCC 700388 / DSM 13276 / CCUG 48851 / CIP 106301 / E264).